Here is an 82-residue protein sequence, read N- to C-terminus: MDLSSKTVVQVVMLALIAQVTFSQHWSYGWLPGGKRSVGELEATIRMMDTGGVMALPEETGAHIPERLRPYDVMSKKRMPHK.

The signal sequence occupies residues 1–23 (MDLSSKTVVQVVMLALIAQVTFS). Q24 is modified (pyrrolidone carboxylic acid). G33 carries the glycine amide modification.

It belongs to the GnRH family.

It localises to the secreted. In terms of biological role, stimulates the secretion of gonadotropins. The polypeptide is Progonadoliberin-3 (gnrh3) (Oncorhynchus masou (Cherry salmon)).